A 656-amino-acid chain; its full sequence is Protein teflon (656 aa).

A C2H2-type 1 zinc finger spans residues 33–56 (LYCHFCRDLFTQLPEFLRHLQSNH). The segment at 80-131 (DKAHEDAQSAGHNSSSGDSRSLMNSEDSRAIDGSEENSDNSPVKPEQIGKQN) is disordered. The span at 89 to 104 (AGHNSSSGDSRSLMNS) shows a compositional bias: polar residues. C2H2-type zinc fingers lie at residues 606–628 (YFCK…LISH) and 632–655 (FQCT…RNAH).

It belongs to the Teflon family.

The protein localises to the nucleus. It localises to the chromosome. Specifically required in males for proper segregation of autosomal bivalents at meiosis I. Expression is required in the male germ line prior to spermatocyte stage S4. May have a role as a bridging molecule maintaining adhesion to hold autosome bivalents together via heterochromatic connections. In Drosophila sechellia (Fruit fly), this protein is Protein teflon.